The primary structure comprises 154 residues: 17 kDa A-type inclusion protein (154 aa).

A coiled-coil region spans residues 17 to 85; it reads QKDCSDKLDR…YKRELERDRY (69 aa). The disordered stretch occupies residues 88 to 154; sequence SRYLTSSSDP…DVEPEHPPAF (67 aa).

In Bos taurus (Bovine), this protein is 17 kDa A-type inclusion protein.